Consider the following 688-residue polypeptide: Glycine--tRNA ligase beta subunit (688 aa).

The protein belongs to the class-II aminoacyl-tRNA synthetase family. As to quaternary structure, tetramer of two alpha and two beta subunits.

The protein localises to the cytoplasm. It carries out the reaction tRNA(Gly) + glycine + ATP = glycyl-tRNA(Gly) + AMP + diphosphate. This Vibrio atlanticus (strain LGP32) (Vibrio splendidus (strain Mel32)) protein is Glycine--tRNA ligase beta subunit.